We begin with the raw amino-acid sequence, 649 residues long: 1-deoxy-D-xylulose-5-phosphate synthase 1 (649 aa).

Thiamine diphosphate-binding positions include histidine 79 and 120 to 122 (AHS). Aspartate 151 is a Mg(2+) binding site. Thiamine diphosphate contacts are provided by residues 152 to 153 (GS), asparagine 180, tyrosine 289, and glutamate 371. Asparagine 180 contacts Mg(2+).

This sequence belongs to the transketolase family. DXPS subfamily. As to quaternary structure, homodimer. Mg(2+) serves as cofactor. Requires thiamine diphosphate as cofactor.

The catalysed reaction is D-glyceraldehyde 3-phosphate + pyruvate + H(+) = 1-deoxy-D-xylulose 5-phosphate + CO2. It functions in the pathway metabolic intermediate biosynthesis; 1-deoxy-D-xylulose 5-phosphate biosynthesis; 1-deoxy-D-xylulose 5-phosphate from D-glyceraldehyde 3-phosphate and pyruvate: step 1/1. In terms of biological role, catalyzes the acyloin condensation reaction between C atoms 2 and 3 of pyruvate and glyceraldehyde 3-phosphate to yield 1-deoxy-D-xylulose-5-phosphate (DXP). The protein is 1-deoxy-D-xylulose-5-phosphate synthase 1 of Zymomonas mobilis subsp. mobilis (strain ATCC 31821 / ZM4 / CP4).